Here is a 266-residue protein sequence, read N- to C-terminus: Putative carbamate hydrolase RutD (266 aa).

Belongs to the AB hydrolase superfamily. Hydrolase RutD family.

It carries out the reaction carbamate + 2 H(+) = NH4(+) + CO2. In terms of biological role, involved in pyrimidine catabolism. May facilitate the hydrolysis of carbamate, a reaction that can also occur spontaneously. The polypeptide is Putative carbamate hydrolase RutD (Escherichia coli O7:K1 (strain IAI39 / ExPEC)).